Consider the following 508-residue polypeptide: MGLPWYRVHTVVLNDPGRLLAVHIMHTALVSGWAGSMALYELAVFDPSDPVLDPMWRQGMFVIPFMTRLGITDSWGGWSISGGTVTNPGIWSYEGVAGAHIVFSGLCFLAAIWHWVYWDLEIFSDERTGKPSLDLPKIFGIHLFLAGVACFGFGAFHVTGLYGPGIWVSDPYGLTGKVQAVNPAWGAEGFDPFVPGGIASHHIAAGTLGILAGLFHLSVRPPQRLYKGLRMGNIETVLSSSIAAVFFAAFVVAGTMWYGSATTPIELFGPTRYQWDQGYFQQEIYRRVSNGLAENLSLSEAWSKIPEKLAFYDYIGNNPAKGGLFRAGSMDNGDGIAVGWLGHPVFRDKEGRELFVRRMPTFFETFPVVLVDEEGIVRADVPFRRAESKYSVEQVGVTVEFYGGELNGVSYSDPATVKKYARRSQLGEIFELDRATLKSDGVFRSSPRGWFTFGHATFALLFFFGHIWHGARTLFRDVFAGIDPDLDAQVEFGTFQKVGDPTTRKQAV.

A run of 6 helical transmembrane segments spans residues 21–36, 101–115, 140–156, 203–218, 237–252, and 457–472; these read AVHI…WAGS, IVFS…IWHW, GIHL…FGAF, IAAG…FHLS, VLSS…AFVV, and TFAL…HGAR.

It belongs to the PsbB/PsbC family. PsbB subfamily. PSII is composed of 1 copy each of membrane proteins PsbA, PsbB, PsbC, PsbD, PsbE, PsbF, PsbH, PsbI, PsbJ, PsbK, PsbL, PsbM, PsbT, PsbX, PsbY, PsbZ, Psb30/Ycf12, at least 3 peripheral proteins of the oxygen-evolving complex and a large number of cofactors. It forms dimeric complexes. It depends on Binds multiple chlorophylls. PSII binds additional chlorophylls, carotenoids and specific lipids. as a cofactor.

It localises to the plastid. Its subcellular location is the chloroplast thylakoid membrane. In terms of biological role, one of the components of the core complex of photosystem II (PSII). It binds chlorophyll and helps catalyze the primary light-induced photochemical processes of PSII. PSII is a light-driven water:plastoquinone oxidoreductase, using light energy to abstract electrons from H(2)O, generating O(2) and a proton gradient subsequently used for ATP formation. The chain is Photosystem II CP47 reaction center protein from Agrostis stolonifera (Creeping bentgrass).